Consider the following 276-residue polypeptide: NADPH-dependent 7-cyano-7-deazaguanine reductase (276 aa).

83–85 (VES) serves as a coordination point for substrate. 85–86 (SK) is a binding site for NADPH. The active-site Thioimide intermediate is C184. Residue D191 is the Proton donor of the active site. Residue 223–224 (HE) coordinates substrate. An NADPH-binding site is contributed by 252–253 (RG).

The protein belongs to the GTP cyclohydrolase I family. QueF type 2 subfamily. As to quaternary structure, homodimer.

It is found in the cytoplasm. The catalysed reaction is 7-aminomethyl-7-carbaguanine + 2 NADP(+) = 7-cyano-7-deazaguanine + 2 NADPH + 3 H(+). Its pathway is tRNA modification; tRNA-queuosine biosynthesis. Catalyzes the NADPH-dependent reduction of 7-cyano-7-deazaguanine (preQ0) to 7-aminomethyl-7-deazaguanine (preQ1). In Azotobacter vinelandii (strain DJ / ATCC BAA-1303), this protein is NADPH-dependent 7-cyano-7-deazaguanine reductase.